The following is a 508-amino-acid chain: Protein NODULATION SIGNALING PATHWAY 2 (508 aa).

The disordered stretch occupies residues 75 to 98 (ITTTTTTTTTTDEEEEEMETTTTT). The 393-residue stretch at 108–500 (VGDDSKGLKL…RRLLSASLWT (393 aa)) folds into the GRAS domain. The tract at residues 115–190 (LKLVHLLMAG…NNHHHHNNNK (76 aa)) is leucine repeat I (LRI). The interval 209 to 273 (FQLLQDMSPY…NNGPHLRITA (65 aa)) is VHIID. The short motif at 240 to 244 (VHVID) is the VHIID element. Positions 289 to 321 (ETGRRLTSFAASLGQPFSFHHCRLDSDETFRPS) are leucine repeat II (LRII). A PFYRE region spans residues 331–422 (LVFNCMLNLP…RVFFGPRIAG (92 aa)). An SAW region spans residues 425-500 (GRIYRTGGEE…RRLLSASLWT (76 aa)).

This sequence belongs to the GRAS family. As to quaternary structure, interacts with RAM1. Interacts with IPN2 and RAD1. Expressed in roots, shoots and leaves.

It localises to the nucleus membrane. The protein resides in the endoplasmic reticulum. Transcriptional regulator essential for Nod-factor-induced gene expression. Acts downstream of calcium spiking and DMI3, a calcium/calmodulin-dependent protein kinase (CCaMK). Transcription factor involved in the control of strigolactone biosynthesis in roots through the activation of the beta-carotene isomerase D27, which participates in a pathway leading to biosynthesis of strigolactones. This Medicago truncatula (Barrel medic) protein is Protein NODULATION SIGNALING PATHWAY 2.